Consider the following 921-residue polypeptide: Valine--tRNA ligase (921 aa).

Residues 40–50 (PNVTGSLHMGH) carry the 'HIGH' region motif. The short motif at 522-526 (KMSKS) is the 'KMSKS' region element. Lysine 525 contributes to the ATP binding site. The stretch at 849 to 921 (MADLIDKEAE…LQHKNRIESL (73 aa)) forms a coiled coil.

Belongs to the class-I aminoacyl-tRNA synthetase family. ValS type 1 subfamily. In terms of assembly, monomer.

It is found in the cytoplasm. The enzyme catalyses tRNA(Val) + L-valine + ATP = L-valyl-tRNA(Val) + AMP + diphosphate. Functionally, catalyzes the attachment of valine to tRNA(Val). As ValRS can inadvertently accommodate and process structurally similar amino acids such as threonine, to avoid such errors, it has a 'posttransfer' editing activity that hydrolyzes mischarged Thr-tRNA(Val) in a tRNA-dependent manner. This chain is Valine--tRNA ligase, found in Legionella pneumophila (strain Lens).